A 217-amino-acid polypeptide reads, in one-letter code: PRELI domain-containing protein 1, mitochondrial (217 aa).

Positions 36–174 (TEDIVHREVT…ILAKLQGEAP (139 aa)) constitute a PRELI/MSF1 domain.

Forms a complex with TRIAP1 in the mitochondrion intermembrane space. Interacts with OPA1 and AIFM1. As to expression, abundantly expressed in all tissues tested except testis with highest levels in thymus.

Its subcellular location is the mitochondrion. The protein resides in the mitochondrion intermembrane space. It carries out the reaction a 1,2-diacyl-sn-glycero-3-phosphate(in) = a 1,2-diacyl-sn-glycero-3-phosphate(out). Functionally, involved in the modulation of the mitochondrial apoptotic pathway by ensuring the accumulation of cardiolipin (CL) in mitochondrial membranes. In vitro, the TRIAP1:PRELID1 complex mediates the transfer of phosphatidic acid (PA) between liposomes and probably functions as a PA transporter across the mitochondrion intermembrane space to provide PA for CL synthesis in the inner membrane. Regulates the mitochondrial apoptotic pathway in primary Th cells. Regulates Th cell differentiation by down-regulating STAT6 thereby reducing IL-4-induced Th2 cell number. May be important for the development of vital and immunocompetent organs. In Mus musculus (Mouse), this protein is PRELI domain-containing protein 1, mitochondrial (Prelid1).